Consider the following 420-residue polypeptide: L-rhamnose isomerase (420 aa).

Mn(2+) contacts are provided by histidine 264, aspartate 296, and aspartate 298.

The protein belongs to the rhamnose isomerase family. Requires Mn(2+) as cofactor.

It localises to the cytoplasm. It catalyses the reaction L-rhamnopyranose = L-rhamnulose. It participates in carbohydrate degradation; L-rhamnose degradation; glycerone phosphate from L-rhamnose: step 1/3. Its function is as follows. Catalyzes the interconversion of L-rhamnose and L-rhamnulose. The chain is L-rhamnose isomerase from Listeria innocua serovar 6a (strain ATCC BAA-680 / CLIP 11262).